The primary structure comprises 569 residues: Protein THEMIS3 (569 aa).

CABIT stretches follow at residues Met-1–Asp-254 and Arg-255–Ser-523.

It belongs to the themis family. As to expression, specifically expressed in the intestine.

In Mus musculus (Mouse), this protein is Protein THEMIS3 (Themis3).